Here is a 944-residue protein sequence, read N- to C-terminus: 2-oxoglutarate dehydrogenase E1 component (944 aa).

Positions 914 to 944 (RRRRSSPAEGDPTVHKKEQERIVSDSLTRKN) are disordered. Over residues 925-936 (PTVHKKEQERIV) the composition is skewed to basic and acidic residues.

Belongs to the alpha-ketoglutarate dehydrogenase family. Homodimer. Part of the 2-oxoglutarate dehydrogenase (OGDH) complex composed of E1 (2-oxoglutarate dehydrogenase), E2 (dihydrolipoamide succinyltransferase) and E3 (dihydrolipoamide dehydrogenase); the complex contains multiple copies of the three enzymatic components (E1, E2 and E3). It depends on thiamine diphosphate as a cofactor.

The catalysed reaction is N(6)-[(R)-lipoyl]-L-lysyl-[protein] + 2-oxoglutarate + H(+) = N(6)-[(R)-S(8)-succinyldihydrolipoyl]-L-lysyl-[protein] + CO2. E1 component of the 2-oxoglutarate dehydrogenase (OGDH) complex which catalyzes the decarboxylation of 2-oxoglutarate, the first step in the conversion of 2-oxoglutarate to succinyl-CoA and CO(2). The sequence is that of 2-oxoglutarate dehydrogenase E1 component from Bacillus subtilis (strain 168).